Here is a 381-residue protein sequence, read N- to C-terminus: Alkanesulfonate monooxygenase (381 aa).

The protein belongs to the SsuD family. As to quaternary structure, homotetramer.

The catalysed reaction is an alkanesulfonate + FMNH2 + O2 = an aldehyde + FMN + sulfite + H2O + 2 H(+). Functionally, catalyzes the desulfonation of aliphatic sulfonates. This chain is Alkanesulfonate monooxygenase, found in Escherichia coli O7:K1 (strain IAI39 / ExPEC).